The sequence spans 239 residues: Phosphoribosylaminoimidazole-succinocarboxamide synthase (239 aa).

This sequence belongs to the SAICAR synthetase family.

It carries out the reaction 5-amino-1-(5-phospho-D-ribosyl)imidazole-4-carboxylate + L-aspartate + ATP = (2S)-2-[5-amino-1-(5-phospho-beta-D-ribosyl)imidazole-4-carboxamido]succinate + ADP + phosphate + 2 H(+). It functions in the pathway purine metabolism; IMP biosynthesis via de novo pathway; 5-amino-1-(5-phospho-D-ribosyl)imidazole-4-carboxamide from 5-amino-1-(5-phospho-D-ribosyl)imidazole-4-carboxylate: step 1/2. This is Phosphoribosylaminoimidazole-succinocarboxamide synthase from Bacillus cereus (strain AH187).